The sequence spans 400 residues: Elongation factor Tu 1 (400 aa).

The tr-type G domain maps to 10-209 (KPHLNIGTIG…AVDSYIPLPQ (200 aa)). Positions 19–26 (GHIDHGKT) are G1. GTP is bound at residue 19-26 (GHIDHGKT). Residue threonine 26 participates in Mg(2+) binding. The tract at residues 60–64 (GITIN) is G2. The segment at 81 to 84 (DCPG) is G3. Residues 81–85 (DCPGH) and 136–139 (NKTD) contribute to the GTP site. Positions 136–139 (NKTD) are G4. The segment at 174 to 176 (SAL) is G5.

This sequence belongs to the TRAFAC class translation factor GTPase superfamily. Classic translation factor GTPase family. EF-Tu/EF-1A subfamily. In terms of assembly, monomer.

The protein localises to the cytoplasm. The enzyme catalyses GTP + H2O = GDP + phosphate + H(+). Functionally, GTP hydrolase that promotes the GTP-dependent binding of aminoacyl-tRNA to the A-site of ribosomes during protein biosynthesis. This Syntrophomonas wolfei subsp. wolfei (strain DSM 2245B / Goettingen) protein is Elongation factor Tu 1.